The following is a 159-amino-acid chain: Small ribosomal subunit protein uS4 (159 aa).

The region spanning 106-158 (RRLQTIVYRMGLAKSIHHARQLIVHGHVAVAGRRVTSPGFLVPRELEDKISLI) is the S4 RNA-binding domain.

This sequence belongs to the universal ribosomal protein uS4 family. Part of the 30S ribosomal subunit. Contacts protein S5. The interaction surface between S4 and S5 is involved in control of translational fidelity.

In terms of biological role, one of the primary rRNA binding proteins, it binds directly to 16S rRNA where it nucleates assembly of the body of the 30S subunit. Its function is as follows. With S5 and S12 plays an important role in translational accuracy. This Pyrobaculum aerophilum (strain ATCC 51768 / DSM 7523 / JCM 9630 / CIP 104966 / NBRC 100827 / IM2) protein is Small ribosomal subunit protein uS4.